The chain runs to 218 residues: Glutathione S-transferase Mu 4 (218 aa).

Positions 2 to 88 (SMTLGYWDIR…YIARKHNLCG (87 aa)) constitute a GST N-terminal domain. Residues 7–8 (YW), 46–50 (WLNEK), 59–60 (NL), and 72–73 (QS) contribute to the glutathione site. One can recognise a GST C-terminal domain in the interval 90-208 (TEEEKIRVDI…KSSRFLPKPL (119 aa)). A substrate-binding site is contributed by Tyr-116.

It belongs to the GST superfamily. Mu family. As to quaternary structure, homodimer. As to expression, expressed in a wide variety of tissues.

The protein localises to the cytoplasm. It carries out the reaction RX + glutathione = an S-substituted glutathione + a halide anion + H(+). The catalysed reaction is 1-chloro-2,4-dinitrobenzene + glutathione = 2,4-dinitrophenyl-S-glutathione + chloride + H(+). It catalyses the reaction (13S,14S)-epoxy-(4Z,7Z,9E,11E,16Z,19Z)-docosahexaenoate + glutathione = (13R)-S-glutathionyl-(14S)-hydroxy-(4Z,7Z,9E,11E,16Z,19Z)-docosahexaenoate. The enzyme catalyses leukotriene C4 = leukotriene A4 + glutathione. In terms of biological role, conjugation of reduced glutathione to a wide number of exogenous and endogenous hydrophobic electrophiles. Catalyzes the conjugation of leukotriene A4 with reduced glutathione (GSH) to form leukotriene C4. Can also catalyze the transfer of a glutathionyl group from glutathione (GSH) to 13(S),14(S)-epoxy-docosahexaenoic acid to form maresin conjugate in tissue regeneration 1 (MCTR1), a bioactive lipid mediator that possess potent anti-inflammatory and proresolving actions. The polypeptide is Glutathione S-transferase Mu 4 (GSTM4) (Homo sapiens (Human)).